Consider the following 353-residue polypeptide: Photosystem II D2 protein (353 aa).

Thr-2 is modified (N-acetylthreonine). A Phosphothreonine modification is found at Thr-2. A helical transmembrane segment spans residues 41–61 (CAYFALGGWFTGTTFVTSWYT). His-118 contributes to the chlorophyll a binding site. Residues 125 to 141 (GFMLRQFELARSVQLRP) form a helical membrane-spanning segment. 2 residues coordinate pheophytin a: Gln-130 and Asn-143. The chain crosses the membrane as a helical span at residues 153 to 166 (VFVSVFLIYPLGQS). His-198 contributes to the chlorophyll a binding site. A helical membrane pass occupies residues 208–228 (AALLCAIHGATVENTLFEDGD). His-215 and Phe-262 together coordinate a plastoquinone. His-215 provides a ligand contact to Fe cation. His-269 contributes to the Fe cation binding site. Residues 279–295 (GLWMSALGVVGLALNLR) traverse the membrane as a helical segment.

It belongs to the reaction center PufL/M/PsbA/D family. PSII is composed of 1 copy each of membrane proteins PsbA, PsbB, PsbC, PsbD, PsbE, PsbF, PsbH, PsbI, PsbJ, PsbK, PsbL, PsbM, PsbT, PsbX, PsbY, PsbZ, Psb30/Ycf12, at least 3 peripheral proteins of the oxygen-evolving complex and a large number of cofactors. It forms dimeric complexes. The D1/D2 heterodimer binds P680, chlorophylls that are the primary electron donor of PSII, and subsequent electron acceptors. It shares a non-heme iron and each subunit binds pheophytin, quinone, additional chlorophylls, carotenoids and lipids. There is also a Cl(-1) ion associated with D1 and D2, which is required for oxygen evolution. The PSII complex binds additional chlorophylls, carotenoids and specific lipids. is required as a cofactor.

It localises to the plastid. The protein resides in the chloroplast thylakoid membrane. It carries out the reaction 2 a plastoquinone + 4 hnu + 2 H2O = 2 a plastoquinol + O2. Photosystem II (PSII) is a light-driven water:plastoquinone oxidoreductase that uses light energy to abstract electrons from H(2)O, generating O(2) and a proton gradient subsequently used for ATP formation. It consists of a core antenna complex that captures photons, and an electron transfer chain that converts photonic excitation into a charge separation. The D1/D2 (PsbA/PsbD) reaction center heterodimer binds P680, the primary electron donor of PSII as well as several subsequent electron acceptors. D2 is needed for assembly of a stable PSII complex. This Lemna minor (Common duckweed) protein is Photosystem II D2 protein.